The following is a 276-amino-acid chain: Large ribosomal subunit protein uL2c (276 aa).

Disordered stretches follow at residues 1–51 and 224–276; these read MAIR…GIIT and VVMN…RRRK. 2 stretches are compositionally biased toward polar residues: residues 7-18 and 27-37; these read RTYTPSTRNRPI and SNPQKKLTSGQ.

It belongs to the universal ribosomal protein uL2 family. In terms of assembly, part of the 50S ribosomal subunit.

It localises to the plastid. The protein resides in the chloroplast. This is Large ribosomal subunit protein uL2c (rpl2) from Cycas taitungensis (Prince sago).